A 194-amino-acid chain; its full sequence is Ras-related protein RabU (194 aa).

19 to 27 (GYDYECGIK) provides a ligand contact to GTP. Residues 42 to 50 (PESQVGVDF) carry the Effector region motif. GTP is bound by residues 68–72 (PQNKY) and 130–133 (NNSE).

It belongs to the small GTPase superfamily. Rab family.

The sequence is that of Ras-related protein RabU (rabU) from Dictyostelium discoideum (Social amoeba).